Reading from the N-terminus, the 147-residue chain is Hemoglobin subunit beta-1 (147 aa).

The region spanning 3–147 (KWSKTELTII…VVSALGKQYH (145 aa)) is the Globin domain. Positions 64 and 93 each coordinate heme b.

It belongs to the globin family. As to quaternary structure, hb1 is a heterotetramer of two alpha chains and two beta-1 chains. As to expression, red blood cells.

Involved in oxygen transport from gills to the various peripheral tissues. The chain is Hemoglobin subunit beta-1 (hbb1) from Cygnodraco mawsoni (Antarctic dragonfish).